Here is a 309-residue protein sequence, read N- to C-terminus: Glutaminase (309 aa).

Substrate is bound by residues Ser64, Asn114, Glu160, Asn167, Tyr191, Tyr243, and Val261.

Belongs to the glutaminase family. Homotetramer.

It carries out the reaction L-glutamine + H2O = L-glutamate + NH4(+). In Agrobacterium fabrum (strain C58 / ATCC 33970) (Agrobacterium tumefaciens (strain C58)), this protein is Glutaminase.